The sequence spans 449 residues: Tubulin alpha chain (449 aa).

The MREC motif signature appears at 1–4 (MREC). Glutamine 11 contacts GTP. Lysine 40 is subject to N6-acetyllysine. Glutamate 71, serine 140, glycine 144, threonine 145, threonine 179, asparagine 206, and asparagine 228 together coordinate GTP. Glutamate 71 lines the Mg(2+) pocket. Residue glutamate 254 is part of the active site. Positions 430-449 (KDYEEVGADSADAEDEGEEY) are disordered. The span at 431 to 449 (DYEEVGADSADAEDEGEEY) shows a compositional bias: acidic residues.

The protein belongs to the tubulin family. Dimer of alpha and beta chains. A typical microtubule is a hollow water-filled tube with an outer diameter of 25 nm and an inner diameter of 15 nM. Alpha-beta heterodimers associate head-to-tail to form protofilaments running lengthwise along the microtubule wall with the beta-tubulin subunit facing the microtubule plus end conferring a structural polarity. Microtubules usually have 13 protofilaments but different protofilament numbers can be found in some organisms and specialized cells. Requires Mg(2+) as cofactor. In terms of processing, some glutamate residues at the C-terminus are polyglycylated, resulting in polyglycine chains on the gamma-carboxyl group. Glycylation is mainly limited to tubulin incorporated into axonemes (cilia and flagella) whereas glutamylation is prevalent in neuronal cells, centrioles, axonemes, and the mitotic spindle. Both modifications can coexist on the same protein on adjacent residues, and lowering polyglycylation levels increases polyglutamylation, and reciprocally. The precise function of polyglycylation is still unclear. Post-translationally, some glutamate residues at the C-terminus are polyglutamylated, resulting in polyglutamate chains on the gamma-carboxyl group. Polyglutamylation plays a key role in microtubule severing by spastin (SPAST). SPAST preferentially recognizes and acts on microtubules decorated with short polyglutamate tails: severing activity by SPAST increases as the number of glutamates per tubulin rises from one to eight, but decreases beyond this glutamylation threshold. Acetylation of alpha chains at Lys-40 is located inside the microtubule lumen. This modification has been correlated with increased microtubule stability, intracellular transport and ciliary assembly. In terms of processing, undergoes a tyrosination/detyrosination cycle, the cyclic removal and re-addition of a C-terminal tyrosine residue by the enzymes tubulin tyrosine carboxypeptidase (MATCAP1, VASH1 or VASH2) and tubulin tyrosine ligase (TTL), respectively. Post-translationally, tyrosination promotes microtubule interaction with CAP-Gly microtubule plus-end tracking proteins. Tyrosinated tubulins regulate the initiation of dynein-driven motility. Detyrosination is involved in metaphase plate congression by guiding chromosomes during mitosis. Detyrosination increases microtubules-dependent mechanotransduction in dystrophic cardiac and skeletal muscle. In cardiomyocytes, detyrosinated microtubules are required to resist to contractile compression during contraction.

The protein resides in the cytoplasm. Its subcellular location is the cytoskeleton. It catalyses the reaction GTP + H2O = GDP + phosphate + H(+). In terms of biological role, tubulin is the major constituent of microtubules, a cylinder consisting of laterally associated linear protofilaments composed of alpha- and beta-tubulin heterodimers. Microtubules grow by the addition of GTP-tubulin dimers to the microtubule end, where a stabilizing cap forms. Below the cap, tubulin dimers are in GDP-bound state, owing to GTPase activity of alpha-tubulin. This is Tubulin alpha chain (tuba) from Xenopus laevis (African clawed frog).